The following is a 133-amino-acid chain: Fatty acid-binding protein, heart (133 aa).

Valine 2 is subject to N-acetylvaline. Phosphothreonine is present on threonine 8. Tyrosine 20 is modified (phosphotyrosine; by Tyr-kinases). Phosphoserine is present on serine 23. Threonine 30 carries the phosphothreonine modification. Serine 83 is subject to Phosphoserine. Position 127–129 (127–129 (RTY)) interacts with (9Z)-octadecenoate. 127–129 (RTY) contributes to the hexadecanoate binding site. Position 127–129 (127–129 (RTY)) interacts with octadecanoate.

This sequence belongs to the calycin superfamily. Fatty-acid binding protein (FABP) family.

The protein resides in the cytoplasm. In terms of biological role, FABPs are thought to play a role in the intracellular transport of long-chain fatty acids and their acyl-CoA esters. In Bos mutus grunniens (Wild yak), this protein is Fatty acid-binding protein, heart (FABP3).